The following is a 266-amino-acid chain: GRIP and coiled-coil domain-containing protein C365.11 (266 aa).

Over residues 1 to 13 (METTVSAKNSLEN) the composition is skewed to polar residues. Positions 1-88 (METTVSAKNS…LDEKVKELEN (88 aa)) are disordered. Ser-10 bears the Phosphoserine mark. Over residues 36 to 49 (ASKKKRKNRKKKKN) the composition is skewed to basic residues. Over residues 63–88 (EEQRSGSIDSKDKEKPLDEKVKELEN) the composition is skewed to basic and acidic residues. Residues 73-188 (KDKEKPLDEK…ESVKSHESEL (116 aa)) adopt a coiled-coil conformation. Phosphoserine occurs at positions 202 and 204. The GRIP domain occupies 216 to 264 (ISKELINKEYARNVLLQFLENHEHRDKILPILSTALDLEEVHQHLILKN).

The protein localises to the cytoplasm. This Schizosaccharomyces pombe (strain 972 / ATCC 24843) (Fission yeast) protein is GRIP and coiled-coil domain-containing protein C365.11.